The following is a 122-amino-acid chain: Protein GL2-INTERACTING REPRESSOR 1 (122 aa).

Over residues 1 to 10 (MSRRSPKLEL) the composition is skewed to basic and acidic residues. The disordered stretch occupies residues 1-62 (MSRRSPKLEL…PSVRYSTSPE (62 aa)). Residues 7-12 (KLELKL) carry the EAR motif. A compositionally biased stretch (low complexity) spans 27-46 (SPSRSATTSPTSPPSSCVSS). Over residues 47-62 (EMNQDEPSVRYSTSPE) the composition is skewed to polar residues.

As to quaternary structure, interacts with GL2. Interacts with TPL. In terms of tissue distribution, expressed in root and shoot meristems.

It localises to the nucleus. Its function is as follows. Acts as a negative regulator of root hair development redundantly with GIR2. GIR1 and GIR2 may function as adapter proteins that associate with GL2 and participate in the control of root hair formation. GIR1 and GIR2 may function as adapter proteins that associate with TPL and participate in the repression of root gene expression. This Arabidopsis thaliana (Mouse-ear cress) protein is Protein GL2-INTERACTING REPRESSOR 1.